We begin with the raw amino-acid sequence, 3416 residues long: Genome polyprotein (3416 aa).

Residues 1-34 (MAKGAVLKGKGGGPPRRVPKETAKKTRQGPGRLP) form a disordered region. Topologically, residues 1–99 (MAKGAVLKGK…NRRRGKRRST (99 aa)) are cytoplasmic. Positions 97–117 (RSTTGLLTSILLACLATLVIS) are cleaved as a propeptide — ER anchor for the capsid protein C, removed in mature form by serine protease NS3. The helical transmembrane segment at 100 to 120 (TGLLTSILLACLATLVISATI) threads the bilayer. Over 121 to 243 (RRERTGDMVI…HLTRVEGWVW (123 aa)) the chain is Extracellular. N-linked (GlcNAc...) asparagine; by host glycosylation occurs at N145. A helical membrane pass occupies residues 244 to 261 (KNKLLTMAFCAVVWMVTD). Position 262 (S262) is a topological domain, cytoplasmic. The chain crosses the membrane as a helical span at residues 263-281 (LPTRFIVITVALCLAPTYA). The Extracellular segment spans residues 282 to 728 (TRCTHLQNRD…HTAFGAAFNT (447 aa)). Intrachain disulfides connect C284–C311, C341–C397, C341–C402, C355–C386, C373–C397, and C373–C402. A fusion peptide region spans residues 379–392 (DRGWGNHCGLFGKG). N435 carries an N-linked (GlcNAc...) asparagine; by host glycan. Intrachain disulfides connect C467/C571 and C588/C619. A helical transmembrane segment spans residues 729 to 749 (IFGGVGFLPRILLGVALAWLG). The Cytoplasmic segment spans residues 750 to 756 (LNSRNPT). Residues 757–777 (LSVGFLITGGLVLTMTLGVGA) traverse the membrane as a helical segment. Topologically, residues 778–1134 (DMGCAIDANR…RSMVLADNGA (357 aa)) are extracellular. 6 disulfides stabilise this stretch: C781-C792, C832-C922, C957-C1002, C1059-C1108, C1070-C1092, and C1091-C1095. 3 N-linked (GlcNAc...) asparagine; by host glycosylation sites follow: N862, N985, and N1001. A helical membrane pass occupies residues 1135-1155 (MLSEGGVPGIVAVFVVLELVI). Residues 1156–1162 (RRRPTTG) lie on the Cytoplasmic side of the membrane. The helical transmembrane segment at 1163–1183 (TSVVWCGVVVLGLVVTGLVTI) threads the bilayer. Residues 1184-1189 (EGLCRY) lie on the Lumenal side of the membrane. Residues 1190 to 1210 (VVAVGILMSMELGPEIVALVL) form a helical membrane-spanning segment. The Cytoplasmic portion of the chain corresponds to 1211-1235 (LQAVFDMRTGLLVAFAVKRAYTTRE). Residues 1236-1256 (AVVTYFLLLVLELGFPEASLS) form a helical membrane-spanning segment. Residues 1257-1295 (NIWKWADSLAMGTLILQACSQEGRARVGYLLAAMMTQKD) are Lumenal-facing. A helical transmembrane segment spans residues 1296–1316 (MAIIHTGLTIFLSAATAMAVW). At 1317 to 1361 (SMIKGQRDQKGLSWATPLVGLFGGEGVGLRLLAFRRLAERRNRRS) the chain is on the cytoplasmic side. A helical transmembrane segment spans residues 1362-1379 (FSEPLTVVGVMLTVASGM). Residues 1380–1384 (VRHTS) lie on the Lumenal side of the membrane. The chain crosses the membrane as a helical span at residues 1385-1405 (QEALCALVAGAFLLLMMVLGT). At 1406–1458 (RKMQLIAEWCGEVEWNPDLVNEGGEVNLKVRQDAMGNLHLTEVEKEERAMALW) the chain is on the cytoplasmic side. Positions 1412 to 1451 (AEWCGEVEWNPDLVNEGGEVNLKVRQDAMGNLHLTEVEKE) are interacts with and activates NS3 protease. Positions 1459 to 1479 (LLAGLVASAFHWAGILIVLAI) form an intramembrane region, helical. Over 1480-2162 (WTFFEMLSSG…RMAERDAPEA (683 aa)) the chain is Cytoplasmic. The 180-residue stretch at 1492–1671 (SELVFSGQGT…EAEKSRPELP (180 aa)) folds into the Peptidase S7 domain. Active-site charge relay system; for serine protease NS3 activity residues include H1545, D1569, and S1629. The Helicase ATP-binding domain occupies 1677–1833 (TGWMSKGQIT…ESNGAIMSEE (157 aa)). 1690-1697 (MHPGSGKT) contacts ATP. Positions 1781–1784 (DEAH) match the DEAH box motif. Positions 1844–2002 (GFDWITEYEG…TLRGPVATFY (159 aa)) constitute a Helicase C-terminal domain. Position 1885 is an N6-acetyllysine; by host (K1885). The helical transmembrane segment at 2163–2183 (FLTIVEVAVLGVATLGILWCF) threads the bilayer. The Lumenal segment spans residues 2184–2191 (VARTSVSR). Positions 2192 to 2211 (MFLGTVVLFAALLLLWIGGV) form an intramembrane region, helical. D2212 is a topological domain (lumenal). Residues 2213-2233 (YGYMAGIALIFYIFLTVLQPE) traverse the membrane as a helical segment. Topologically, residues 2234-2246 (PGKQRSSDDNRLA) are cytoplasmic. The helical transmembrane segment at 2247–2267 (YFLLGLLSLAGLVTANEMGML) threads the bilayer. Topologically, residues 2268–2301 (DKTKADLAGLMWHGEQRHPAWEEWTNVDIQPARS) are lumenal. The helical intramembrane region spans 2302-2322 (WGTYVLIVSLFTPYMLHQLQT). Over 2323 to 2345 (KIQQLVNSSVASGAQAMRDLGGG) the chain is Lumenal. The helical intramembrane region spans 2346 to 2366 (TPFFGVAGHVIALGVTSLVGA). The Lumenal segment spans residues 2367-2368 (TP). A helical transmembrane segment spans residues 2369–2389 (LSLGLGVALAAFHLAIVASGL). The Cytoplasmic segment spans residues 2390-2432 (EAELTQRAHRVFFSAMVKNPMVDGDVINPFPDGEPKPVLYERR). Residues 2433–2453 (MSLILAIALCMVSVVLNRTAA) form a helical membrane-spanning segment. Residues 2454–2476 (SMTEAGAVGLAALGQLVHPETET) lie on the Lumenal side of the membrane. Residues 2477–2497 (LWTMPMACGMAGLVRGSFWGL) form a helical membrane-spanning segment. The Cytoplasmic segment spans residues 2498-3416 (LPMGHRLWLK…WDLKLESNII (919 aa)). The mRNA cap 0-1 NS5-type MT domain maps to 2514–2778 (GGADGETLGD…EVDLGTGTRC (265 aa)). S2569 lines the S-adenosyl-L-methionine pocket. The residue at position 2569 (S2569) is a Phosphoserine. K2574 acts as the For 2'-O-MTase activity in catalysis. Positions 2599, 2600, 2617, 2618, 2644, and 2645 each coordinate S-adenosyl-L-methionine. D2659 serves as the catalytic For 2'-O-MTase activity. Position 2660 (I2660) interacts with S-adenosyl-L-methionine. Catalysis depends on for 2'-O-MTase activity residues K2696 and E2732. The segment at 2732-2736 (EMYFS) is interaction with host SCRIB. Residue Y2734 coordinates S-adenosyl-L-methionine. E2952, H2956, C2961, and C2964 together coordinate Zn(2+). In terms of domain architecture, RdRp catalytic spans 3042–3191 (GLFYADDTAG…RPIDDRFGKA (150 aa)). The Zn(2+) site is built by H3226, C3242, and C3361.

The protein in the N-terminal section; belongs to the class I-like SAM-binding methyltransferase superfamily. mRNA cap 0-1 NS5-type methyltransferase family. As to quaternary structure, homodimer. Interacts (via N-terminus) with host EXOC1 (via C-terminus); this interaction results in EXOC1 degradation through the proteasome degradation pathway. Forms heterodimers with envelope protein E in the endoplasmic reticulum and Golgi. In terms of assembly, homodimer; in the endoplasmic reticulum and Golgi. Interacts with protein prM. Interacts with non-structural protein 1. As to quaternary structure, homodimer; Homohexamer when secreted. Interacts with envelope protein E. Interacts (via N-terminus) with serine protease NS3. In terms of assembly, forms a heterodimer with serine protease NS3. May form homooligomers. As to quaternary structure, forms a heterodimer with NS2B. Interacts with NS4B. Interacts with unphosphorylated RNA-directed RNA polymerase NS5; this interaction stimulates RNA-directed RNA polymerase NS5 guanylyltransferase activity. Interacts with serine protease NS3. In terms of assembly, homodimer. Interacts with host STAT2; this interaction inhibits the phosphorylation of the latter, and, when all viral proteins are present (polyprotein), targets STAT2 for degradation. Interacts with serine protease NS3. Post-translationally, specific enzymatic cleavages in vivo yield mature proteins. Cleavages in the lumen of endoplasmic reticulum are performed by host signal peptidase, whereas cleavages in the cytoplasmic side are performed by serine protease NS3. Signal cleavage at the 2K-4B site requires a prior NS3 protease-mediated cleavage at the 4A-2K site. Cleaved in post-Golgi vesicles by a host furin, releasing the mature small envelope protein M, and peptide pr. This cleavage is incomplete as up to 30% of viral particles still carry uncleaved prM. In terms of processing, N-glycosylated. Post-translationally, N-glycosylated. The excreted form is glycosylated and this is required for efficient secretion of the protein from infected cells. Acetylated by host KAT5. Acetylation modulates NS3 RNA-binding and unwinding activities and plays an important positive role for viral replication. In terms of processing, phosphorylated on serines residues. This phosphorylation may trigger NS5 nuclear localization.

The protein localises to the virion. The protein resides in the host nucleus. Its subcellular location is the host cytoplasm. It localises to the host perinuclear region. It is found in the secreted. The protein localises to the virion membrane. The protein resides in the host endoplasmic reticulum membrane. The enzyme catalyses Selective hydrolysis of -Xaa-Xaa-|-Yaa- bonds in which each of the Xaa can be either Arg or Lys and Yaa can be either Ser or Ala.. It catalyses the reaction RNA(n) + a ribonucleoside 5'-triphosphate = RNA(n+1) + diphosphate. It carries out the reaction a ribonucleoside 5'-triphosphate + H2O = a ribonucleoside 5'-diphosphate + phosphate + H(+). The catalysed reaction is ATP + H2O = ADP + phosphate + H(+). The enzyme catalyses a 5'-end (5'-triphosphoguanosine)-ribonucleoside in mRNA + S-adenosyl-L-methionine = a 5'-end (N(7)-methyl 5'-triphosphoguanosine)-ribonucleoside in mRNA + S-adenosyl-L-homocysteine. It catalyses the reaction a 5'-end (N(7)-methyl 5'-triphosphoguanosine)-ribonucleoside in mRNA + S-adenosyl-L-methionine = a 5'-end (N(7)-methyl 5'-triphosphoguanosine)-(2'-O-methyl-ribonucleoside) in mRNA + S-adenosyl-L-homocysteine + H(+). In terms of biological role, plays a role in virus budding by binding to the cell membrane and gathering the viral RNA into a nucleocapsid that forms the core of a mature virus particle. During virus entry, may induce genome penetration into the host cytoplasm after hemifusion induced by the surface proteins. Can migrate to the cell nucleus where it modulates host functions. Its function is as follows. Inhibits RNA silencing by interfering with host Dicer. Prevents premature fusion activity of envelope proteins in trans-Golgi by binding to envelope protein E at pH6.0. After virion release in extracellular space, gets dissociated from E dimers. Functionally, acts as a chaperone for envelope protein E during intracellular virion assembly by masking and inactivating envelope protein E fusion peptide. prM is the only viral peptide matured by host furin in the trans-Golgi network probably to avoid catastrophic activation of the viral fusion activity in acidic Golgi compartment prior to virion release. prM-E cleavage is inefficient, and many virions are only partially matured. These uncleaved prM would play a role in immune evasion. In terms of biological role, may play a role in virus budding. Exerts cytotoxic effects by activating a mitochondrial apoptotic pathway through M ectodomain. May display a viroporin activity. Its function is as follows. Binds to host cell surface receptor and mediates fusion between viral and cellular membranes. Envelope protein is synthesized in the endoplasmic reticulum in the form of heterodimer with protein prM. They play a role in virion budding in the ER, and the newly formed immature particle is covered with 60 spikes composed of heterodimer between precursor prM and envelope protein E. The virion is transported to the Golgi apparatus where the low pH causes dissociation of PrM-E heterodimers and formation of E homodimers. prM-E cleavage is inefficient, and many virions are only partially matured. These uncleaved prM would play a role in immune evasion. Involved in immune evasion, pathogenesis and viral replication. Once cleaved off the polyprotein, is targeted to three destinations: the viral replication cycle, the plasma membrane and the extracellular compartment. Essential for viral replication. Required for formation of the replication complex and recruitment of other non-structural proteins to the ER-derived membrane structures. Excreted as a hexameric lipoparticle that plays a role against host immune response. Antagonizing the complement function. Binds to the host macrophages and dendritic cells. Inhibits signal transduction originating from Toll-like receptor 3 (TLR3). Functionally, component of the viral RNA replication complex that functions in virion assembly and antagonizes the host immune response. In terms of biological role, required cofactor for the serine protease function of NS3. May have membrane-destabilizing activity and form viroporins. Its function is as follows. Displays three enzymatic activities: serine protease, NTPase and RNA helicase. NS3 serine protease, in association with NS2B, performs its autocleavage and cleaves the polyprotein at dibasic sites in the cytoplasm: C-prM, NS2A-NS2B, NS2B-NS3, NS3-NS4A, NS4A-2K and NS4B-NS5. NS3 RNA helicase binds RNA and unwinds dsRNA in the 3' to 5' direction. Regulates the ATPase activity of the NS3 helicase activity. NS4A allows NS3 helicase to conserve energy during unwinding. Functionally, functions as a signal peptide for NS4B and is required for the interferon antagonism activity of the latter. In terms of biological role, induces the formation of ER-derived membrane vesicles where the viral replication takes place. Inhibits interferon (IFN)-induced host STAT1 phosphorylation and nuclear translocation, thereby preventing the establishment of cellular antiviral state by blocking the IFN-alpha/beta pathway. Inhibits STAT2 translocation in the nucleus after IFN-alpha treatment. Its function is as follows. Replicates the viral (+) and (-) RNA genome, and performs the capping of genomes in the cytoplasm. NS5 methylates viral RNA cap at guanine N-7 and ribose 2'-O positions. Besides its role in RNA genome replication, also prevents the establishment of cellular antiviral state by blocking the interferon-alpha/beta (IFN-alpha/beta) signaling pathway. Inhibits host TYK2 and STAT2 phosphorylation, thereby preventing activation of JAK-STAT signaling pathway. The chain is Genome polyprotein from Homo sapiens (Human).